Reading from the N-terminus, the 260-residue chain is BTB/POZ domain-containing protein KCTD21 (260 aa).

The 70-residue stretch at 3 to 72 (DPITLNVGGK…LRTSHLDLPE (70 aa)) folds into the BTB domain. Residues 88–112 (QVQPLIEALQEKEVELSKAEKNAML) adopt a coiled-coil conformation.

Homopentamer. Interacts with KCTD11; KCTD21 and KCTD11 may associate in pentameric assemblies. Interacts (via BTB domain) with CUL3; indicative for a participation in a BCR (BTB-CUL3-RBX1) E3 ubiquitin-protein ligase complex. As to expression, highly expressed in cerebellum and brain. Expression is down-regulated in medulloblastoma.

It functions in the pathway protein modification; protein ubiquitination. In terms of biological role, probable substrate-specific adapter of a BCR (BTB-CUL3-RBX1) E3 ubiquitin-protein ligase complex mediating the ubiquitination and subsequent proteasomal degradation of target proteins. Promotes the ubiquitination of HDAC1. Can function as antagonist of the Hedgehog pathway by affecting the nuclear transfer of transcription factor GLI1; the function probably occurs via HDAC1 down-regulation, keeping GLI1 acetylated and inactive. Inhibits cell growth and tumorigenicity of medulloblastoma (MDB). This is BTB/POZ domain-containing protein KCTD21 (KCTD21) from Homo sapiens (Human).